Reading from the N-terminus, the 404-residue chain is Cysteine desulfurase IscS (404 aa).

Residues 75–76, Asn-155, Gln-183, and 203–205 each bind pyridoxal 5'-phosphate; these read AT and SGH. At Lys-206 the chain carries N6-(pyridoxal phosphate)lysine. Thr-243 is a binding site for pyridoxal 5'-phosphate. The Cysteine persulfide intermediate role is filled by Cys-328. Cys-328 provides a ligand contact to [2Fe-2S] cluster.

The protein belongs to the class-V pyridoxal-phosphate-dependent aminotransferase family. NifS/IscS subfamily. Homodimer. Forms a heterotetramer with IscU, interacts with other sulfur acceptors. The cofactor is pyridoxal 5'-phosphate.

Its subcellular location is the cytoplasm. The catalysed reaction is (sulfur carrier)-H + L-cysteine = (sulfur carrier)-SH + L-alanine. It functions in the pathway cofactor biosynthesis; iron-sulfur cluster biosynthesis. Functionally, master enzyme that delivers sulfur to a number of partners involved in Fe-S cluster assembly, tRNA modification or cofactor biosynthesis. Catalyzes the removal of elemental sulfur atoms from cysteine to produce alanine. Functions as a sulfur delivery protein for Fe-S cluster synthesis onto IscU, an Fe-S scaffold assembly protein, as well as other S acceptor proteins. The polypeptide is Cysteine desulfurase IscS (Actinobacillus succinogenes (strain ATCC 55618 / DSM 22257 / CCUG 43843 / 130Z)).